Here is a 288-residue protein sequence, read N- to C-terminus: Nucleotide-binding protein Mlg_2233 (288 aa).

11–18 lines the ATP pocket; the sequence is GLSGSGKS. 63–66 serves as a coordination point for GTP; it reads DARN.

The protein belongs to the RapZ-like family.

Displays ATPase and GTPase activities. In Alkalilimnicola ehrlichii (strain ATCC BAA-1101 / DSM 17681 / MLHE-1), this protein is Nucleotide-binding protein Mlg_2233.